The following is a 230-amino-acid chain: Ly6/PLAUR domain-containing protein 8 (230 aa).

The first 20 residues, 1 to 20 (MKSFLFAGIVVVLTVAAVDT), serve as a signal peptide directing secretion. N-linked (GlcNAc...) asparagine glycans are attached at residues N37, N44, N74, N77, N90, N106, N110, N132, N137, N156, N168, N181, and N197. Positions 125–172 (CPACYGNNETSCNETRKCYGERCVSIIAEFTNETKTLVLKGCSNVSIS) constitute a UPAR/Ly6 domain. S211 carries GPI-anchor amidated serine lipidation. The propeptide at 212 to 230 (QASFTPLALASILLLSLLL) is removed in mature form.

This sequence belongs to the CNF-like-inhibitor family. In terms of processing, highly N-glycosylated. Not O-glycosylated. GPI-anchored. The GPI-anchor is cleaved, leading to secretion into the colonic lumen.

The protein localises to the cell membrane. The protein resides in the secreted. In terms of biological role, secreted protein specifically required to prevent invasion of Gram-negative bacteria in the inner mucus layer of the colon epithelium, a portion of the large intestine which is free of commensal microbiota. Prevents invasion of flagellated microbiota by binding to the flagellum of bacteria, such as P.mirabilis, thereby inhibiting bacterial motility in the intestinal lumen. Segregation of intestinal bacteria and epithelial cells in the colon is required to preserve intestinal homeostasis. The sequence is that of Ly6/PLAUR domain-containing protein 8 (LYPD8) from Bos taurus (Bovine).